The primary structure comprises 310 residues: Olfactory receptor 9Q1 (310 aa).

At 1–25 the chain is on the extracellular side; it reads MAEMNLTLVTEFLLIAFTEYPEWAL. The N-linked (GlcNAc...) asparagine glycan is linked to N5. Residues 26–46 form a helical membrane-spanning segment; sequence PLFLLFLFMYLITVLGNLEMI. The Cytoplasmic segment spans residues 47-54; sequence ILILMDHQ. A helical transmembrane segment spans residues 55 to 75; that stretch reads LHAPMYFLLSHLAFMDVCYSS. The Extracellular segment spans residues 76–99; that stretch reads ITVPQMLAVLLEHGAALSYTRCAA. Residues C97 and C189 are joined by a disulfide bond. Residues 100–120 form a helical membrane-spanning segment; that stretch reads QFFLFTFFGSIDCYLLALMAY. The Cytoplasmic portion of the chain corresponds to 121-139; the sequence is DRYLAVCQPLLYVTILTQQ. The chain crosses the membrane as a helical span at residues 140-160; that stretch reads ARLSLVAGAYVAGLISALVRT. Residues 161–197 are Extracellular-facing; the sequence is VSAFTLSFCGTSEIDFIFCDLPPLLKLTCGESYTQEV. Residues 198-217 traverse the membrane as a helical segment; sequence LIIMFAIFVIPASMVVILVS. The Cytoplasmic portion of the chain corresponds to 218–236; the sequence is YLFIIVAIMGIPAGSQAKT. The helical transmembrane segment at 237 to 257 threads the bilayer; that stretch reads FSTCTSHLTAVSLFFGTLIFM. The Extracellular segment spans residues 258 to 270; the sequence is YLRGNSDQSSEKN. Residues 271–291 traverse the membrane as a helical segment; that stretch reads RVVSVLYTEVIPMLNPLIYSL. The Cytoplasmic segment spans residues 292–310; the sequence is RNKEVKEALRKILNRAKLS.

Belongs to the G-protein coupled receptor 1 family.

The protein localises to the cell membrane. Functionally, odorant receptor. The chain is Olfactory receptor 9Q1 (OR9Q1) from Homo sapiens (Human).